Reading from the N-terminus, the 354-residue chain is Uroporphyrinogen decarboxylase (354 aa).

Residues Arg-27 to Arg-31, Asp-77, Tyr-154, Thr-209, and His-327 contribute to the substrate site.

This sequence belongs to the uroporphyrinogen decarboxylase family. As to quaternary structure, homodimer.

It localises to the cytoplasm. The enzyme catalyses uroporphyrinogen III + 4 H(+) = coproporphyrinogen III + 4 CO2. It participates in porphyrin-containing compound metabolism; protoporphyrin-IX biosynthesis; coproporphyrinogen-III from 5-aminolevulinate: step 4/4. In terms of biological role, catalyzes the decarboxylation of four acetate groups of uroporphyrinogen-III to yield coproporphyrinogen-III. This chain is Uroporphyrinogen decarboxylase, found in Shigella dysenteriae serotype 1 (strain Sd197).